Here is a 189-residue protein sequence, read N- to C-terminus: dCTP deaminase (189 aa).

Residues Lys112 to Arg117, Thr136 to Glu138, Gln157, Tyr171, and Gln181 contribute to the dCTP site. The Proton donor/acceptor role is filled by Glu138.

This sequence belongs to the dCTP deaminase family. Homotrimer.

It carries out the reaction dCTP + H2O + H(+) = dUTP + NH4(+). Its pathway is pyrimidine metabolism; dUMP biosynthesis; dUMP from dCTP (dUTP route): step 1/2. Its function is as follows. Catalyzes the deamination of dCTP to dUTP. The sequence is that of dCTP deaminase from Xanthomonas euvesicatoria pv. vesicatoria (strain 85-10) (Xanthomonas campestris pv. vesicatoria).